The following is a 1183-amino-acid chain: PAN2-PAN3 deadenylation complex catalytic subunit PAN2 (1183 aa).

WD repeat units follow at residues 150–189 and 289–328; these read SIEN…KAAQ and DVSS…ENAA. Residues 331 to 478 are linker; the sequence is ENGSIVLPPF…EEIEEELNDG (148 aa). Positions 439–470 are disordered; sequence AEGRARGKGRRDSGPRFRSEKDKKGTYKDKEE. A compositionally biased stretch (basic and acidic residues) spans 448–469; that stretch reads RRDSGPRFRSEKDKKGTYKDKE. Residues 479-864 enclose the USP domain; it reads EVPKYYRKVE…VPAVIILERE (386 aa). One can recognise an Exonuclease domain in the interval 916–1085; that stretch reads VAIDAEFVAL…HDSIEDAHFA (170 aa). A divalent metal cation contacts are provided by aspartate 919, glutamate 921, aspartate 1028, and aspartate 1081. The interval 1155–1183 is disordered; it reads KSRMATPPPPTKLGLPQWASQNSPSPLRR. Residues 1172-1183 are compositionally biased toward polar residues; the sequence is WASQNSPSPLRR.

This sequence belongs to the peptidase C19 family. PAN2 subfamily. As to quaternary structure, forms a heterotrimer with an asymmetric homodimer of the regulatory subunit PAN3 to form the poly(A)-nuclease (PAN) deadenylation complex. It depends on a divalent metal cation as a cofactor.

The protein resides in the cytoplasm. The enzyme catalyses Exonucleolytic cleavage of poly(A) to 5'-AMP.. Positively regulated by the regulatory subunit PAN3. Its function is as follows. Catalytic subunit of the poly(A)-nuclease (PAN) deadenylation complex, one of two cytoplasmic mRNA deadenylases involved in mRNA turnover. PAN specifically shortens poly(A) tails of RNA and the activity is stimulated by poly(A)-binding protein PAB1. PAN deadenylation is followed by rapid degradation of the shortened mRNA tails by the CCR4-NOT complex. Deadenylated mRNAs are then degraded by two alternative mechanisms, namely exosome-mediated 3'-5' exonucleolytic degradation, or deadenylation-dependent mRNA decaping and subsequent 5'-3' exonucleolytic degradation by XRN1. May also be involved in post-transcriptional maturation of mRNA poly(A) tails. In Cryptococcus neoformans var. neoformans serotype D (strain B-3501A) (Filobasidiella neoformans), this protein is PAN2-PAN3 deadenylation complex catalytic subunit PAN2.